Consider the following 88-residue polypeptide: Hemotin (88 aa).

The Lumenal portion of the chain corresponds to 1 to 14 (MDCFKVFEVVFQSE). A helical membrane pass occupies residues 15 to 37 (INPLLLIPAVATIALTLCCYCYH). The Cytoplasmic segment spans residues 38–88 (GYQWIRDRRTARIEEQQAQLPLPLSRISITPGCSMVATTKLTHSRNSVDIY).

As to quaternary structure, interacts with 14-3-3zeta. Expressed in hemocytes.

The protein localises to the early endosome membrane. In terms of biological role, negatively regulates early endosome maturation by binding to and repressing the activity of 14-3-3zeta which prevents the 14-3-3zeta-mediated activation of phosphoinositide 3-kinase Pi3K68D. This, in turn, inhibits the Pi3K68D-mediated conversion of phosphatidylinositol to phosphatidylinositol-3-phosphate and prevents progression of early endosomes through the maturation process which regulates subsequent steps of phagocytic processing. In Drosophila melanogaster (Fruit fly), this protein is Hemotin.